We begin with the raw amino-acid sequence, 372 residues long: Cytochrome b (372 aa).

Transmembrane regions (helical) follow at residues 25–45 (FGSMLLTCLALQTLTGFFLAI), 69–90 (WIMQNMHAIGASMFFICIYTHI), 105–125 (WLSGTALLIVLMATAFFGYVL), and 170–190 (FFALHFILPFLIISLSSIHIM). Heme b is bound by residues histidine 75 and histidine 89. Heme b is bound by residues histidine 174 and histidine 188. Histidine 193 serves as a coordination point for a ubiquinone. 4 consecutive transmembrane segments (helical) span residues 218–238 (YKDMFIITTMIATLFIIMSFM), 280–300 (LGGTMALLMSVLILTTMPFTH), 312–332 (ITQVVFWTFIATFITITWTAT), and 339–358 (FILISQMASSMYFLFFIIHP).

It belongs to the cytochrome b family. The cytochrome bc1 complex contains 3 respiratory subunits (MT-CYB, CYC1 and UQCRFS1), 2 core proteins (UQCRC1 and UQCRC2) and probably 6 low-molecular weight proteins. It depends on heme b as a cofactor.

The protein resides in the mitochondrion inner membrane. Functionally, component of the ubiquinol-cytochrome c reductase complex (complex III or cytochrome b-c1 complex) that is part of the mitochondrial respiratory chain. The b-c1 complex mediates electron transfer from ubiquinol to cytochrome c. Contributes to the generation of a proton gradient across the mitochondrial membrane that is then used for ATP synthesis. This Pseudechis australis (Mulga snake) protein is Cytochrome b (MT-CYB).